The primary structure comprises 229 residues: Ribosome maturation factor RimM (229 aa).

A disordered region spans residues 1 to 39 (MAGHDSGSAKRGRSPSFGVFVRKPVERAPTKGAGDGAAD). The PRC barrel domain occupies 148–229 (ADEFYWVDLI…RIVVDWEADY (82 aa)).

Belongs to the RimM family. As to quaternary structure, binds ribosomal protein uS19.

Its subcellular location is the cytoplasm. Its function is as follows. An accessory protein needed during the final step in the assembly of 30S ribosomal subunit, possibly for assembly of the head region. Essential for efficient processing of 16S rRNA. May be needed both before and after RbfA during the maturation of 16S rRNA. It has affinity for free ribosomal 30S subunits but not for 70S ribosomes. The chain is Ribosome maturation factor RimM from Burkholderia thailandensis (strain ATCC 700388 / DSM 13276 / CCUG 48851 / CIP 106301 / E264).